The primary structure comprises 448 residues: Homogentisate 1,2-dioxygenase (448 aa).

Residues 1–26 (MNMLAPAAKNAFTPASPDRPAYQSGF) are disordered. Residue H302 is the Proton acceptor of the active site. Fe cation contacts are provided by H345 and E351. Residues Y360 and H381 each coordinate homogentisate. Fe cation is bound at residue H381.

This sequence belongs to the homogentisate dioxygenase family. As to quaternary structure, hexamer; dimer of trimers. The cofactor is Fe cation.

It carries out the reaction homogentisate + O2 = 4-maleylacetoacetate + H(+). The protein operates within amino-acid degradation; L-phenylalanine degradation; acetoacetate and fumarate from L-phenylalanine: step 4/6. Functionally, involved in the catabolism of homogentisate (2,5-dihydroxyphenylacetate or 2,5-OH-PhAc), a central intermediate in the degradation of phenylalanine and tyrosine. Catalyzes the oxidative ring cleavage of the aromatic ring of homogentisate to yield maleylacetoacetate. The chain is Homogentisate 1,2-dioxygenase from Ralstonia nicotianae (strain ATCC BAA-1114 / GMI1000) (Ralstonia solanacearum).